The primary structure comprises 94 residues: Large ribosomal subunit protein bL25 (94 aa).

Belongs to the bacterial ribosomal protein bL25 family. As to quaternary structure, part of the 50S ribosomal subunit; part of the 5S rRNA/L5/L18/L25 subcomplex. Contacts the 5S rRNA. Binds to the 5S rRNA independently of L5 and L18.

This is one of the proteins that binds to the 5S RNA in the ribosome where it forms part of the central protuberance. This chain is Large ribosomal subunit protein bL25, found in Cronobacter sakazakii (strain ATCC BAA-894) (Enterobacter sakazakii).